Consider the following 485-residue polypeptide: Glutamyl-tRNA(Gln) amidotransferase subunit A (485 aa).

Catalysis depends on charge relay system residues K78 and S153. S177 serves as the catalytic Acyl-ester intermediate.

It belongs to the amidase family. GatA subfamily. Heterotrimer of A, B and C subunits.

The catalysed reaction is L-glutamyl-tRNA(Gln) + L-glutamine + ATP + H2O = L-glutaminyl-tRNA(Gln) + L-glutamate + ADP + phosphate + H(+). Its function is as follows. Allows the formation of correctly charged Gln-tRNA(Gln) through the transamidation of misacylated Glu-tRNA(Gln) in organisms which lack glutaminyl-tRNA synthetase. The reaction takes place in the presence of glutamine and ATP through an activated gamma-phospho-Glu-tRNA(Gln). In Bacillus cytotoxicus (strain DSM 22905 / CIP 110041 / 391-98 / NVH 391-98), this protein is Glutamyl-tRNA(Gln) amidotransferase subunit A.